We begin with the raw amino-acid sequence, 744 residues long: Serine/threonine-protein kinase GM11705 (744 aa).

Polar residues predominate over residues 17-35; it reads VLSSHQPSPSATHPQSVPS. Disordered regions lie at residues 17–38 and 54–78; these read VLSS…SKAN and NVQE…PEKE. Doublecortin domains lie at 154–240 and 309–392; these read LRIK…VEYN and RIVT…AEDF. The region spanning 473–731 is the Protein kinase domain; it reads YTLGRIIGDG…SEDILDHPWT (259 aa). ATP contacts are provided by residues 479–487 and Lys-502; that span reads IGDGNFAIV. The Proton acceptor role is filled by Asp-594.

Belongs to the protein kinase superfamily. CAMK Ser/Thr protein kinase family. CaMK subfamily.

It catalyses the reaction L-seryl-[protein] + ATP = O-phospho-L-seryl-[protein] + ADP + H(+). It carries out the reaction L-threonyl-[protein] + ATP = O-phospho-L-threonyl-[protein] + ADP + H(+). This chain is Serine/threonine-protein kinase GM11705, found in Drosophila sechellia (Fruit fly).